The sequence spans 117 residues: Large ribosomal subunit protein eL34 (117 aa).

A Phosphoserine modification is found at Ser-12. 2 positions are modified to N6-acetyllysine: Lys-36 and Lys-43. Lys-108 is covalently cross-linked (Glycyl lysine isopeptide (Lys-Gly) (interchain with G-Cter in SUMO2)).

It belongs to the eukaryotic ribosomal protein eL34 family. Component of the large ribosomal subunit.

It is found in the cytoplasm. Its subcellular location is the cytosol. The protein localises to the endoplasmic reticulum. Its function is as follows. Component of the large ribosomal subunit. The ribosome is a large ribonucleoprotein complex responsible for the synthesis of proteins in the cell. The protein is Large ribosomal subunit protein eL34 (RPL34) of Sus scrofa (Pig).